We begin with the raw amino-acid sequence, 107 residues long: Parvalbumin beta (107 aa).

S1 bears the N-acetylserine mark. EF-hand domains are found at residues 37–72 and 76–107; these read KSLDDVKKAFYVIDQDKSGFIEEDELKLFLQNFSPS and LTDAETKAFLADGDKDGDGMIGVDEFAAMIKA. Residues D50, D52, S54, F56, E58, E61, D89, D91, D93, M95, and E100 each coordinate Ca(2+).

It belongs to the parvalbumin family.

Its function is as follows. In muscle, parvalbumin is thought to be involved in relaxation after contraction. It binds two calcium ions. The polypeptide is Parvalbumin beta (Esox lucius (Northern pike)).